The following is a 947-amino-acid chain: Translation initiation factor IF-2 (947 aa).

The segment at 69-353 (RRRKEVPQEE…TPKPQKKTEV (285 aa)) is disordered. Positions 81 to 108 (APPAAAEEPSSVDTAVAEEAPAEEVQPV) are enriched in low complexity. Acidic residues predominate over residues 139–155 (PVVEEVIAEPAVEEVVE). 2 stretches are compositionally biased toward basic and acidic residues: residues 215–226 (VTKEKPKVEKAT) and 246–262 (KRQE…ERPK). Low complexity predominate over residues 264–284 (AKPSGGPAPRAKEAAPQAAVP). Positions 327–337 (QVYEPERDERR) are enriched in basic and acidic residues. Residues 338–348 (MRRGKKTPKPQ) are compositionally biased toward basic residues. Residues 447-616 (PRPPVVTIMG…LLQAEVLELK (170 aa)) enclose the tr-type G domain. The segment at 456-463 (GHVDHGKT) is G1. 456-463 (GHVDHGKT) serves as a coordination point for GTP. Residues 481–485 (GITQH) form a G2 region. The interval 502–505 (DTPG) is G3. Residues 502 to 506 (DTPGH) and 556 to 559 (NKMD) contribute to the GTP site. Residues 556-559 (NKMD) form a G4 region. The interval 592–594 (SAK) is G5.

Belongs to the TRAFAC class translation factor GTPase superfamily. Classic translation factor GTPase family. IF-2 subfamily.

It is found in the cytoplasm. Its function is as follows. One of the essential components for the initiation of protein synthesis. Protects formylmethionyl-tRNA from spontaneous hydrolysis and promotes its binding to the 30S ribosomal subunits. Also involved in the hydrolysis of GTP during the formation of the 70S ribosomal complex. The sequence is that of Translation initiation factor IF-2 from Syntrophotalea carbinolica (strain DSM 2380 / NBRC 103641 / GraBd1) (Pelobacter carbinolicus).